A 222-amino-acid polypeptide reads, in one-letter code: 7-cyano-7-deazaguanine synthase (222 aa).

7-17 (LSGGLDSSTVL) contacts ATP. Residues cysteine 191, cysteine 199, cysteine 202, and cysteine 205 each coordinate Zn(2+).

It belongs to the QueC family. Requires Zn(2+) as cofactor.

It catalyses the reaction 7-carboxy-7-deazaguanine + NH4(+) + ATP = 7-cyano-7-deazaguanine + ADP + phosphate + H2O + H(+). It participates in purine metabolism; 7-cyano-7-deazaguanine biosynthesis. Functionally, catalyzes the ATP-dependent conversion of 7-carboxy-7-deazaguanine (CDG) to 7-cyano-7-deazaguanine (preQ(0)). The polypeptide is 7-cyano-7-deazaguanine synthase (Trichodesmium erythraeum (strain IMS101)).